Consider the following 279-residue polypeptide: Energy-coupling factor transporter ATP-binding protein EcfA1 (279 aa).

The region spanning 6–240 is the ABC transporter domain; sequence VEFRNVSFRY…KDALREIGLD (235 aa). 40-47 contacts ATP; sequence GHNGSGKS.

This sequence belongs to the ABC transporter superfamily. Energy-coupling factor EcfA family. As to quaternary structure, forms a stable energy-coupling factor (ECF) transporter complex composed of 2 membrane-embedded substrate-binding proteins (S component), 2 ATP-binding proteins (A component) and 2 transmembrane proteins (T component).

It is found in the cell membrane. In terms of biological role, ATP-binding (A) component of a common energy-coupling factor (ECF) ABC-transporter complex. Unlike classic ABC transporters this ECF transporter provides the energy necessary to transport a number of different substrates. This Oceanobacillus iheyensis (strain DSM 14371 / CIP 107618 / JCM 11309 / KCTC 3954 / HTE831) protein is Energy-coupling factor transporter ATP-binding protein EcfA1.